The sequence spans 357 residues: uncharacterized protein (357 aa).

The stretch at 173 to 211 is one HEAT repeat; the sequence is VLPILEKLMQDESLYVRKSVANNLNDISKTHPHLLRKVA.

This is an uncharacterized protein from Bacillus subtilis (strain 168).